The sequence spans 327 residues: Diacylglycerol acyltransferase/mycolyltransferase Ag85B (327 aa).

Residues 1–38 form the signal peptide; that stretch reads MIDVSGKIRAWGRWLLVGAAATLPSLISLAGGAATASA. Residue 80–81 coordinates substrate; it reads LR. The interval 96-106 is fibronectin-binding; sequence FEWYYQSGLSV. A disulfide bridge connects residues Cys125 and Cys130. Substrate contacts are provided by Ser164 and Asp192. The Nucleophile role is filled by Ser164. Glu268 is a catalytic residue. Residues 270–273, Lys277, and 300–302 each bind substrate; these read FVHG and HSW. His300 is a catalytic residue.

The protein belongs to the mycobacterial A85 antigen family.

The protein localises to the secreted. It carries out the reaction 2 alpha,alpha'-trehalose 6-mycolate = alpha,alpha'-trehalose 6,6'-bismycolate + alpha,alpha-trehalose. It catalyses the reaction an acyl-CoA + a 1,2-diacyl-sn-glycerol = a triacyl-sn-glycerol + CoA. The antigen 85 proteins (FbpA, FbpB, FbpC) are responsible for the high affinity of mycobacteria for fibronectin, a large adhesive glycoprotein, which facilitates the attachment of M.tuberculosis to murine alveolar macrophages (AMs). They also help to maintain the integrity of the cell wall by catalyzing the transfer of mycolic acids to cell wall arabinogalactan and through the synthesis of alpha,alpha-trehalose dimycolate (TDM, cord factor). They catalyze the transfer of a mycoloyl residue from one molecule of alpha,alpha-trehalose monomycolate (TMM) to another TMM, leading to the formation of TDM. This chain is Diacylglycerol acyltransferase/mycolyltransferase Ag85B (fbpB), found in Mycobacterium leprae (strain TN).